A 377-amino-acid chain; its full sequence is Succinyl-diaminopimelate desuccinylase (377 aa).

Histidine 75 serves as a coordination point for Zn(2+). The active site involves aspartate 77. Aspartate 106 contributes to the Zn(2+) binding site. Glutamate 136 functions as the Proton acceptor in the catalytic mechanism. 3 residues coordinate Zn(2+): glutamate 137, glutamate 165, and histidine 350.

It belongs to the peptidase M20A family. DapE subfamily. As to quaternary structure, homodimer. Zn(2+) is required as a cofactor. It depends on Co(2+) as a cofactor.

It carries out the reaction N-succinyl-(2S,6S)-2,6-diaminopimelate + H2O = (2S,6S)-2,6-diaminopimelate + succinate. It functions in the pathway amino-acid biosynthesis; L-lysine biosynthesis via DAP pathway; LL-2,6-diaminopimelate from (S)-tetrahydrodipicolinate (succinylase route): step 3/3. Its function is as follows. Catalyzes the hydrolysis of N-succinyl-L,L-diaminopimelic acid (SDAP), forming succinate and LL-2,6-diaminopimelate (DAP), an intermediate involved in the bacterial biosynthesis of lysine and meso-diaminopimelic acid, an essential component of bacterial cell walls. The protein is Succinyl-diaminopimelate desuccinylase of Sphingopyxis alaskensis (strain DSM 13593 / LMG 18877 / RB2256) (Sphingomonas alaskensis).